The sequence spans 128 residues: 3-aminoacrylate deaminase RutC (128 aa).

It belongs to the RutC family.

The enzyme catalyses (Z)-3-aminoacrylate + H2O + H(+) = 3-oxopropanoate + NH4(+). In terms of biological role, involved in pyrimidine catabolism. Catalyzes the deamination of 3-aminoacrylate to malonic semialdehyde, a reaction that can also occur spontaneously. RutC may facilitate the reaction and modulate the metabolic fitness, rather than catalyzing essential functions. This chain is 3-aminoacrylate deaminase RutC, found in Enterobacter cloacae subsp. cloacae (strain ATCC 13047 / DSM 30054 / NBRC 13535 / NCTC 10005 / WDCM 00083 / NCDC 279-56).